An 89-amino-acid polypeptide reads, in one-letter code: MGKRKSAAKPPPKKRMDKLDTVFSCPFCNHGSSVECRIDMKNLIGEASCRICQENFSTTVNALTEPIDIYSEWIDECERVNNVEDDDGA.

Zn(2+) is bound by residues Cys-25, Cys-28, Cys-49, and Cys-52.

This sequence belongs to the ELOF1 family.

It localises to the nucleus. Functionally, transcription elongation factor implicated in the maintenance of proper chromatin structure in actively transcribed regions. The chain is Transcription elongation factor 1 homolog from Oryza sativa subsp. japonica (Rice).